We begin with the raw amino-acid sequence, 311 residues long: tRNA dimethylallyltransferase (311 aa).

G11 to S18 lines the ATP pocket. T13 to S18 contributes to the substrate binding site. Interaction with substrate tRNA regions lie at residues D36–Q39 and Q160–R164.

The protein belongs to the IPP transferase family. As to quaternary structure, monomer. Mg(2+) is required as a cofactor.

The catalysed reaction is adenosine(37) in tRNA + dimethylallyl diphosphate = N(6)-dimethylallyladenosine(37) in tRNA + diphosphate. Its function is as follows. Catalyzes the transfer of a dimethylallyl group onto the adenine at position 37 in tRNAs that read codons beginning with uridine, leading to the formation of N6-(dimethylallyl)adenosine (i(6)A). The polypeptide is tRNA dimethylallyltransferase (Rickettsia prowazekii (strain Madrid E)).